The chain runs to 342 residues: S-adenosylmethionine:tRNA ribosyltransferase-isomerase (342 aa).

This sequence belongs to the QueA family. In terms of assembly, monomer.

It is found in the cytoplasm. It carries out the reaction 7-aminomethyl-7-carbaguanosine(34) in tRNA + S-adenosyl-L-methionine = epoxyqueuosine(34) in tRNA + adenine + L-methionine + 2 H(+). The protein operates within tRNA modification; tRNA-queuosine biosynthesis. Transfers and isomerizes the ribose moiety from AdoMet to the 7-aminomethyl group of 7-deazaguanine (preQ1-tRNA) to give epoxyqueuosine (oQ-tRNA). The polypeptide is S-adenosylmethionine:tRNA ribosyltransferase-isomerase (Streptococcus pyogenes serotype M3 (strain ATCC BAA-595 / MGAS315)).